The following is a 724-amino-acid chain: Protein Aster-A (724 aa).

The segment covering 1–18 (MFDTTPHSGRSTPSSSPS) has biased composition (low complexity). Positions 1–66 (MFDTTPHSGR…TPSTQSLGSR (66 aa)) are disordered. Residues 57 to 66 (TPSTQSLGSR) show a composition bias toward polar residues. Residues 91–158 (EDFRKLFSKL…KEVTCLKKEK (68 aa)) enclose the GRAM domain. The segment at 256–336 (SSGAADRSQE…GPTTLGPLDL (81 aa)) is disordered. Residues serine 263, serine 267, and serine 271 each carry the phosphoserine modification. Over residues 300–312 (DSQPDASSSQTVT) the composition is skewed to polar residues. The segment covering 326–336 (DGPTTLGPLDL) has biased composition (low complexity). Residues 367 to 538 (SGRLLINSVF…ELAKAEKLSL (172 aa)) form the VASt domain. At serine 415 the chain carries Phosphoserine. Positions 560 to 579 (SWRAHGDGPQHPDPDPCARA) are disordered. The span at 563 to 575 (AHGDGPQHPDPDP) shows a compositional bias: basic and acidic residues. A helical transmembrane segment spans residues 610–630 (LISIVICVSLIILIALNVLLF).

In terms of tissue distribution, expressed in liver.

The protein resides in the endoplasmic reticulum membrane. It localises to the cell membrane. Its subcellular location is the cytoplasmic vesicle. It is found in the autophagosome. In terms of biological role, cholesterol transporter that mediates non-vesicular transport of cholesterol from the plasma membrane (PM) to the endoplasmic reticulum (ER). Contains unique domains for binding cholesterol and the PM, thereby serving as a molecular bridge for the transfer of cholesterol from the PM to the ER. Plays a crucial role in cholesterol homeostasis and has the unique ability to localize to the PM based on the level of membrane cholesterol. In lipid-poor conditions localizes to the ER membrane and in response to excess cholesterol in the PM is recruited to the endoplasmic reticulum-plasma membrane contact sites (EPCS) which is mediated by the GRAM domain. At the EPCS, the sterol-binding VASt/ASTER domain binds to the cholesterol in the PM and facilitates its transfer from the PM to ER. May play a role in tumor progression. Plays a role in autophagy regulation and is required for biogenesis of the autophagosome. This function in autophagy requires its cholesterol-transfer activity. In Homo sapiens (Human), this protein is Protein Aster-A.